A 147-amino-acid polypeptide reads, in one-letter code: Transthyretin (147 aa).

The N-terminal stretch at 1 to 20 is a signal peptide; the sequence is MASHRLLLLCLAGLVFVSEA. Position 30 is a sulfocysteine (Cys-30). Lys-35 lines the L-thyroxine pocket. At Ser-72 the chain carries Phosphoserine. Glu-74 is a binding site for L-thyroxine. Asn-118 carries an N-linked (GlcNAc...) asparagine glycan. L-thyroxine is bound at residue Ser-137.

It belongs to the transthyretin family. In terms of assembly, homotetramer. Dimer of dimers. In the homotetramer, subunits assemble around a central channel that can accommodate two ligand molecules. Interacts with RBP4. Post-translationally, sulfonation of the reactive cysteine Cys-30 enhances the stability of the native conformation of TTR, avoiding misassembly of the protein leading to amyloid formation.

It is found in the secreted. Thyroid hormone-binding protein. Probably transports thyroxine from the bloodstream to the brain. This is Transthyretin (TTR) from Macaca fascicularis (Crab-eating macaque).